The following is an 893-amino-acid chain: Probable ion channel CASTOR (893 aa).

A disordered region spans residues 1-94; it reads MPLDPDSSPA…APRRRDPRYA (94 aa). A compositionally biased stretch (pro residues) spans 65 to 85; sequence PLPPPEQQKQQQPPPTTPPPA. A helical transmembrane segment spans residues 132–152; that stretch reads TLRWSGMVSVAAIVLCFSSLV. Residues 156 to 178 are a coiled coil; sequence SSLHDQVHHLKAQLAEATTKLQS. 3 helical membrane-spanning segments follow: residues 210–230, 266–286, and 318–338; these read LLLSLSTLYAPLLILKYMDLF, LVLLVATLLLIGLGGLALYGV, and LVSVSISIGGMLVFAMMLGLV. RCK N-terminal domains are found at residues 359 to 500 and 619 to 792; these read QSHT…ETVV and PERI…DYVL. The stretch at 389-415 forms a coiled coil; the sequence is TIVVMAEKDKEEMEADIAKMEFDLKGT.

It belongs to the castor/pollux (TC 1.A.1.23) family. As to expression, expressed in roots, leaves, stems and panicles.

The protein localises to the nucleus membrane. Functionally, required for mycorrhizal symbiosis. The polypeptide is Probable ion channel CASTOR (Oryza sativa subsp. japonica (Rice)).